Reading from the N-terminus, the 203-residue chain is Probable chemoreceptor glutamine deamidase CheD (203 aa).

This sequence belongs to the CheD family.

The catalysed reaction is L-glutaminyl-[protein] + H2O = L-glutamyl-[protein] + NH4(+). Probably deamidates glutamine residues to glutamate on methyl-accepting chemotaxis receptors (MCPs), playing an important role in chemotaxis. This is Probable chemoreceptor glutamine deamidase CheD from Methylobacillus flagellatus (strain ATCC 51484 / DSM 6875 / VKM B-1610 / KT).